The following is a 270-amino-acid chain: Cyclic pyranopterin monophosphate synthase, mitochondrial (270 aa).

The N-terminal 32 residues, 1–32 (MISTLRRAVFLRRFPAVVSPIKRAFSSRIDDE), are a transit peptide targeting the mitochondrion. Substrate is bound by residues 187–189 (LCH) and 225–226 (ME). D240 is a catalytic residue.

It belongs to the MoaC family. As to quaternary structure, homohexamer. Abundantly expressed in the roots.

Its subcellular location is the mitochondrion matrix. The enzyme catalyses (8S)-3',8-cyclo-7,8-dihydroguanosine 5'-triphosphate = cyclic pyranopterin phosphate + diphosphate. It participates in cofactor biosynthesis; molybdopterin biosynthesis. Functionally, catalyzes the conversion of (8S)-3',8-cyclo-7,8-dihydroguanosine 5'-triphosphate to cyclic pyranopterin monophosphate (cPMP). The protein is Cyclic pyranopterin monophosphate synthase, mitochondrial (CNX3) of Arabidopsis thaliana (Mouse-ear cress).